Consider the following 1208-residue polypeptide: Urease accessory protein 2 (1208 aa).

2 coiled-coil regions span residues 187–362 (RDKI…EKAA) and 400–469 (IKAL…MHEQ). One can recognise an SMC hinge domain in the interval 523 to 633 (DGVFGPLYDL…ICEDLQTAAH (111 aa)). 2 coiled-coil regions span residues 688–771 (HIEV…YEEE) and 817–903 (NRLE…VQTQ). The segment at 748-773 (ESSLEEAEGASRDAKAKRASYEEELR) is disordered. Residues 756-773 (GASRDAKAKRASYEEELR) show a composition bias toward basic and acidic residues.

This sequence belongs to the SMC family. SMC3 subfamily. In terms of assembly, component of cohesin complexes.

The protein localises to the nucleus. Its function is as follows. Central component of cohesin, a complex required for chromosome cohesion during the cell cycle. The cohesin complex may form a large proteinaceous ring within which sister chromatids can be trapped. At anaphase, the complex is cleaved and dissociates from chromatin, allowing sister chromatids to segregate. Cohesion is coupled to DNA replication and is involved in DNA repair. The cohesin complex also plays an important role in spindle pole assembly during mitosis and in chromosomes movement. Is unrelated to urease function in C.neoformans. The chain is Urease accessory protein 2 from Cryptococcus neoformans var. grubii serotype A (strain H99 / ATCC 208821 / CBS 10515 / FGSC 9487) (Filobasidiella neoformans var. grubii).